The sequence spans 184 residues: Ribosome-recycling factor (184 aa).

The protein belongs to the RRF family.

The protein resides in the cytoplasm. Functionally, responsible for the release of ribosomes from messenger RNA at the termination of protein biosynthesis. May increase the efficiency of translation by recycling ribosomes from one round of translation to another. This is Ribosome-recycling factor from Agathobacter rectalis (strain ATCC 33656 / DSM 3377 / JCM 17463 / KCTC 5835 / VPI 0990) (Eubacterium rectale).